A 513-amino-acid polypeptide reads, in one-letter code: Histidine ammonia-lyase (513 aa).

Positions 144 to 146 (ASG) form a cross-link, 5-imidazolinone (Ala-Gly). Ser145 is subject to 2,3-didehydroalanine (Ser).

The protein belongs to the PAL/histidase family. Post-translationally, contains an active site 4-methylidene-imidazol-5-one (MIO), which is formed autocatalytically by cyclization and dehydration of residues Ala-Ser-Gly.

The protein resides in the cytoplasm. The enzyme catalyses L-histidine = trans-urocanate + NH4(+). It participates in amino-acid degradation; L-histidine degradation into L-glutamate; N-formimidoyl-L-glutamate from L-histidine: step 1/3. This is Histidine ammonia-lyase from Streptococcus pyogenes serotype M3 (strain ATCC BAA-595 / MGAS315).